The sequence spans 844 residues: Prickle-like protein 2 (844 aa).

Residues 18 to 126 form the PET domain; that stretch reads FDFQRNSTSD…NVRPFPVTMT (109 aa). S92 bears the Phosphoserine mark. LIM zinc-binding domains lie at 128–193, 193–253, and 253–317; these read AICE…CLKP, PRCA…LYAE, and EYCD…EDPN. Disordered regions lie at residues 314–350 and 481–519; these read EDPNGSDSSDSAFQNARAKESRRSAKIGKNKGKTEEP and ESYSDMSSQSFSETRGSIQVPKYEEEEEEEGGLSTQQCR. Polar residues predominate over residues 318-327; the sequence is GSDSSDSAFQ. 3 positions are modified to phosphoserine: S319, S321, and S322. A compositionally biased stretch (low complexity) spans 481 to 493; it reads ESYSDMSSQSFSE. Residues T534, T536, and T539 each carry the phosphothreonine modification. Residues S543, S546, S607, and S642 each carry the phosphoserine modification. The interval 639–709 is disordered; that stretch reads MHQSFDFDGG…HLASEREAIS (71 aa). Residues 682–692 are compositionally biased toward basic residues; sequence FRPHRSRRSRR. Residues 693–709 are compositionally biased toward basic and acidic residues; it reads SRSDNALHLASEREAIS. S731 is modified (phosphoserine). Residues 822–844 are disordered; the sequence is STLGGRGQLHSRKRQKSKNCIIS. C841 carries the cysteine methyl ester modification. A lipid anchor (S-farnesyl cysteine) is attached at C841. A propeptide spans 842–844 (removed in mature form); it reads IIS.

Belongs to the prickle / espinas / testin family. As to expression, expressed in brain, eye and testis. Additionally in fetal brain, adult cartilage, pancreatic islet, gastric cancer and uterus tumors.

It is found in the nucleus membrane. This Homo sapiens (Human) protein is Prickle-like protein 2 (PRICKLE2).